A 760-amino-acid polypeptide reads, in one-letter code: Transmembrane channel-like protein 1 (760 aa).

The tract at residues 1 to 80 is disordered; that stretch reads MSPKKVQIKV…RRRRLKRGAE (80 aa). Residues 1 to 182 lie on the Cytoplasmic side of the membrane; it reads MSPKKVQIKV…KIKAIESQFG (182 aa). Positions 13–29 are enriched in acidic residues; that stretch reads KEDETEESSSEEEEEVE. A compositionally biased stretch (basic and acidic residues) spans 30–39; the sequence is DKLPRRESLR. A Phosphoserine modification is found at serine 37. A Phosphothreonine modification is found at threonine 45. The segment covering 50–61 has biased composition (acidic residues); the sequence is NEDDPEPEPEDE. A Phosphoserine modification is found at serine 128. The helical transmembrane segment at 183 to 220 threads the bilayer; that stretch reads SSVASYFLFLRWMYGVNMVLFILTFSLIMLPEYLWGLP. Residues 221–271 lie on the Extracellular side of the membrane; the sequence is YGSLPRKTVPRAEEASAANFGVLYDFNGLAQYSVLFYGYYDNKRTIGWMNF. A helical transmembrane segment spans residues 272 to 303; that stretch reads RLPLSYFLVGIMCIGYSFLVVLKAMTKNIGDD. At 304–359 the chain is on the cytoplasmic side; sequence GGGDDNTFNFSWKVFTSWDYLIGNPETADNKFNSITMNFKEAITEEKAAQVEENVH. Serine 314 bears the Phosphoserine mark. The helical transmembrane segment at 360–390 threads the bilayer; the sequence is LIRFLRFLANFFVFLTLGGSGYLIFWAVKRS. The Extracellular segment spans residues 391 to 402; sequence QEFAQQDPDTLG. Threonine 400 is modified (phosphothreonine). The helical transmembrane segment at 403–430 threads the bilayer; it reads WWEKNEMNMVMSLLGMFCPTLFDLFAEL. The Cytoplasmic portion of the chain corresponds to 431–434; it reads EDYH. Residues 435-469 form a helical membrane-spanning segment; sequence PLIALKWLLGRIFALLLGNLYVFILALMDEINNKI. Residues 470–515 are Extracellular-facing; it reads EEEKLVKANITLWEANMIKAYNASFSENSTGPPFFVHPADVPRGPC. The chain crosses the membrane as a helical span at residues 516–553; the sequence is WETMVGQEFVRLTVSDVLTTYVTILIGDFLRACFVRFC. The Cytoplasmic segment spans residues 554 to 572; it reads NYCWCWDLEYGYPSYTEFD. The chain crosses the membrane as a helical span at residues 573 to 593; sequence ISGNVLALIFNQGMIWMGSFF. At 594–596 the chain is on the extracellular side; it reads APS. A helical transmembrane segment spans residues 597–619; that stretch reads LPGINILRLHTSMYFQCWAVMCC. Over 620–633 the chain is Cytoplasmic; it reads NVPEARVFKASRSN. A helical membrane pass occupies residues 634–657; sequence NFYLGMLLLILFLSTMPVLYMIVS. The Extracellular portion of the chain corresponds to 658–700; the sequence is LPPSFDCGPFSGKNRMFEVIGETLEHDFPSWMAKILRQLSNPG. The chain crosses the membrane as a helical span at residues 701-734; it reads LVIAVILVMVLAIYYLNATAKGQKAANLDLKKKM. The Cytoplasmic segment spans residues 735 to 760; it reads KMQALENKMRNKKMAAARAAAAAGRQ.

This sequence belongs to the TMC family. Forms the MET channel complosed of TMC dimer (TMC1 or TMC2), TMIE, TOMT, CIB (CIB2 or CIB3), LHFPL5 and PDH15. The interaction of TMC1 and TMC2 with TOMT is required for the transportation of TMC1/2 into the stereocilia of hair cells. Interacts (via N-terminus) with both isoforms CD1 and CD3 of PCDH15. Can form a heterodimer with TMC2, TMC5 or TMC7. In terms of tissue distribution, detected in fetal cochlea, and at low levels in placenta and testis.

It is found in the cell membrane. The enzyme catalyses Ca(2+)(in) = Ca(2+)(out). Pore-forming subunit of the mechanotransducer (MET) non-selective cation channel complex located at the tips of stereocilia of cochlear hair cells and that mediates sensory transduction in the auditory system. The MET complex is composed of two dimeric pore-forming ion-conducting transmembrane TMC (TMC1 or TMC2) subunits, and aided by several auxiliary proteins including LHFPL5, TMIE, CIB2/3 and TOMT, and the tip-link PCDH15. MET channel is activated by tension in the tip-link extending from the side wall of one stereocilium to the tip of the adjacent shorter stereocilium, where the channel is located. TMC1 MET channel is highly permeable to calcium and likely transports monovalent cations. Also involved in vestibular hair cells transduction current. This chain is Transmembrane channel-like protein 1, found in Homo sapiens (Human).